Reading from the N-terminus, the 304-residue chain is Acetyl-coenzyme A carboxylase carboxyl transferase subunit beta (304 aa).

The CoA carboxyltransferase N-terminal domain maps to 25 to 294 (LWIKCPETGE…KAIKRDTATE (270 aa)).

This sequence belongs to the AccD/PCCB family. As to quaternary structure, acetyl-CoA carboxylase is a heterohexamer composed of biotin carboxyl carrier protein (AccB), biotin carboxylase (AccC) and two subunits each of ACCase subunit alpha (AccA) and ACCase subunit beta (AccD).

It is found in the cytoplasm. It carries out the reaction N(6)-carboxybiotinyl-L-lysyl-[protein] + acetyl-CoA = N(6)-biotinyl-L-lysyl-[protein] + malonyl-CoA. It participates in lipid metabolism; malonyl-CoA biosynthesis; malonyl-CoA from acetyl-CoA: step 1/1. Its function is as follows. Component of the acetyl coenzyme A carboxylase (ACC) complex. Biotin carboxylase (BC) catalyzes the carboxylation of biotin on its carrier protein (BCCP) and then the CO(2) group is transferred by the transcarboxylase to acetyl-CoA to form malonyl-CoA. The sequence is that of Acetyl-coenzyme A carboxylase carboxyl transferase subunit beta from Sinorhizobium medicae (strain WSM419) (Ensifer medicae).